We begin with the raw amino-acid sequence, 239 residues long: Fibroblast growth factor 3 (239 aa).

Residues 1–17 (MGLIWLLLLSLLEPGWP) form the signal peptide. An N-linked (GlcNAc...) asparagine glycan is attached at N65. A disordered region spans residues 193 to 239 (QLQSGLPRPPGKGVQPRRRRQKQSPDNLEPSHVQASRLGSQLEASAH). Residues 225-239 (VQASRLGSQLEASAH) show a composition bias toward polar residues.

This sequence belongs to the heparin-binding growth factors family. As to quaternary structure, interacts with FGFR1 and FGFR2. Affinity between fibroblast growth factors (FGFs) and their receptors is increased by heparan sulfate glycosaminoglycans that function as coreceptors.

The protein localises to the secreted. In terms of biological role, plays an important role in the regulation of embryonic development, cell proliferation, and cell differentiation. Required for normal ear development. The sequence is that of Fibroblast growth factor 3 (FGF3) from Homo sapiens (Human).